The chain runs to 876 residues: Alanine--tRNA ligase (876 aa).

Lysine 74 carries the N6-acetyllysine modification. Positions 564, 568, 666, and 670 each coordinate Zn(2+).

This sequence belongs to the class-II aminoacyl-tRNA synthetase family. In terms of assembly, homotetramer. The cofactor is Zn(2+).

The protein localises to the cytoplasm. It carries out the reaction tRNA(Ala) + L-alanine + ATP = L-alanyl-tRNA(Ala) + AMP + diphosphate. Functionally, catalyzes the attachment of alanine to tRNA(Ala) in a two-step reaction: alanine is first activated by ATP to form Ala-AMP and then transferred to the acceptor end of tRNA(Ala). Also edits incorrectly charged Ser-tRNA(Ala) and Gly-tRNA(Ala) via its editing domain. The sequence is that of Alanine--tRNA ligase from Escherichia coli O157:H7.